Here is an 89-residue protein sequence, read N- to C-terminus: Large ribosomal subunit protein bL27 (89 aa).

Residues 1-21 (MAHKKAGGSSRNGRDSKGKRL) form a disordered region.

This sequence belongs to the bacterial ribosomal protein bL27 family.

The protein is Large ribosomal subunit protein bL27 of Bradyrhizobium sp. (strain ORS 278).